The chain runs to 220 residues: Zinc finger protein 36 (220 aa).

The C2H2-type 1 zinc-finger motif lies at 73–95 (FRCTVCGKAFASYQALGGHKSSH). Residues 90-134 (GHKSSHRKPPSPGDHYGAAAAAQQLASAGDSKEDSASSAAGSTGP) form a disordered region. Over residues 107 to 117 (AAAAAQQLASA) the composition is skewed to low complexity. The C2H2-type 2 zinc finger occupies 135-157 (HRCTICRRSFATGQALGGHKRCH).

Probable transcription factor involved in abscisic acid (ABA) signaling. Required for the regulation of the cross-talk between NADPH oxidase, hydrogen peroxide and MAP kinase in ABA signaling. Regulates the expression of the NADPH oxidase genes RBOHB and RBOHE, and the MAPK genes MPK1, MPK4, MPK5, MPK7 and MPK14. Regulates ABA-induced hydrogen peroxide production and antioxidant defense. Required for tolerance to water stress and oxidative stress. This Oryza sativa subsp. japonica (Rice) protein is Zinc finger protein 36.